The following is a 146-amino-acid chain: UPF0178 protein BCG9842_B2187 (146 aa).

It belongs to the UPF0178 family.

The protein is UPF0178 protein BCG9842_B2187 of Bacillus cereus (strain G9842).